The chain runs to 442 residues: Protein PRRC1-A (442 aa).

The disordered stretch occupies residues 1–27 (MMEESGIETTPPSTPPPSTIGTSVPAA).

This sequence belongs to the PRRC1 family.

The protein resides in the golgi apparatus. The sequence is that of Protein PRRC1-A (prrc1-a) from Xenopus laevis (African clawed frog).